We begin with the raw amino-acid sequence, 163 residues long: Phosphopantetheine adenylyltransferase (163 aa).

Substrate is bound at residue S10. Residues 10–11 (SF) and H18 contribute to the ATP site. Substrate contacts are provided by K42, L78, and K92. ATP-binding positions include 93–95 (GVR), E103, and 127–133 (HAHVSSS).

It belongs to the bacterial CoaD family. As to quaternary structure, homohexamer. Requires Mg(2+) as cofactor.

Its subcellular location is the cytoplasm. It carries out the reaction (R)-4'-phosphopantetheine + ATP + H(+) = 3'-dephospho-CoA + diphosphate. It functions in the pathway cofactor biosynthesis; coenzyme A biosynthesis; CoA from (R)-pantothenate: step 4/5. Functionally, reversibly transfers an adenylyl group from ATP to 4'-phosphopantetheine, yielding dephospho-CoA (dPCoA) and pyrophosphate. This Clavibacter michiganensis subsp. michiganensis (strain NCPPB 382) protein is Phosphopantetheine adenylyltransferase.